The primary structure comprises 444 residues: Trigger factor (444 aa).

Positions 165–250 constitute a PPIase FKBP-type domain; sequence GDFAKFDFEG…LHEIQELKIP (86 aa).

This sequence belongs to the FKBP-type PPIase family. Tig subfamily.

The protein localises to the cytoplasm. It catalyses the reaction [protein]-peptidylproline (omega=180) = [protein]-peptidylproline (omega=0). Involved in protein export. Acts as a chaperone by maintaining the newly synthesized protein in an open conformation. Functions as a peptidyl-prolyl cis-trans isomerase. This Campylobacter jejuni subsp. jejuni serotype O:23/36 (strain 81-176) protein is Trigger factor.